Consider the following 396-residue polypeptide: Ornithine aminotransferase (396 aa).

Residue Lys255 is modified to N6-(pyridoxal phosphate)lysine.

This sequence belongs to the class-III pyridoxal-phosphate-dependent aminotransferase family. OAT subfamily. The cofactor is pyridoxal 5'-phosphate.

The protein localises to the cytoplasm. It carries out the reaction a 2-oxocarboxylate + L-ornithine = L-glutamate 5-semialdehyde + an L-alpha-amino acid. It participates in amino-acid biosynthesis; L-proline biosynthesis; L-glutamate 5-semialdehyde from L-ornithine: step 1/1. Functionally, catalyzes the interconversion of ornithine to glutamate semialdehyde. The polypeptide is Ornithine aminotransferase (Bacillus cereus (strain 03BB102)).